Reading from the N-terminus, the 322-residue chain is Alanine dehydrogenase (322 aa).

The Proton donor/acceptor role is filled by Lys65. NAD(+)-binding positions include Arg108, 135-136 (TQ), 157-159 (DVR), 217-219 (GAD), Lys223, and Ser290.

It belongs to the ornithine cyclodeaminase/mu-crystallin family. Archaeal alanine dehydrogenase subfamily. Homodimer.

The enzyme catalyses L-alanine + NAD(+) + H2O = pyruvate + NH4(+) + NADH + H(+). In terms of biological role, catalyzes the NAD(+)-dependent oxidative deamination of L-alanine to pyruvate, and the reverse reaction, the reductive amination of pyruvate. Its physiological role is not known. Cannot use NADP(+) instead of NAD(+) as a cosubstrate. In the deamination direction, can also efficiently use L-2-aminobutyrate as substrate. In the reductive amination direction, also exhibits high activity with 2-oxobutyrate and oxaloacetate as substrate. In contrast to bacterial homologs, does not exhibit any ornithine cyclodeaminase activity. The sequence is that of Alanine dehydrogenase from Archaeoglobus fulgidus (strain ATCC 49558 / DSM 4304 / JCM 9628 / NBRC 100126 / VC-16).